A 407-amino-acid chain; its full sequence is 1-deoxy-D-xylulose 5-phosphate reductoisomerase (407 aa).

NADPH contacts are provided by Thr-22, Gly-23, Ser-24, Ile-25, Gly-48, Asn-51, and Asn-128. Residue Lys-129 participates in 1-deoxy-D-xylulose 5-phosphate binding. An NADPH-binding site is contributed by Glu-130. Asp-152 lines the Mn(2+) pocket. 4 residues coordinate 1-deoxy-D-xylulose 5-phosphate: Ser-153, Glu-154, Ser-178, and His-201. A Mn(2+)-binding site is contributed by Glu-154. Gly-207 lines the NADPH pocket. Residues Ser-214, Asn-219, Lys-220, and Glu-223 each contribute to the 1-deoxy-D-xylulose 5-phosphate site. A Mn(2+)-binding site is contributed by Glu-223.

It belongs to the DXR family. It depends on Mg(2+) as a cofactor. Mn(2+) is required as a cofactor.

It carries out the reaction 2-C-methyl-D-erythritol 4-phosphate + NADP(+) = 1-deoxy-D-xylulose 5-phosphate + NADPH + H(+). The protein operates within isoprenoid biosynthesis; isopentenyl diphosphate biosynthesis via DXP pathway; isopentenyl diphosphate from 1-deoxy-D-xylulose 5-phosphate: step 1/6. Catalyzes the NADPH-dependent rearrangement and reduction of 1-deoxy-D-xylulose-5-phosphate (DXP) to 2-C-methyl-D-erythritol 4-phosphate (MEP). The sequence is that of 1-deoxy-D-xylulose 5-phosphate reductoisomerase from Mycobacterium avium (strain 104).